Reading from the N-terminus, the 172-residue chain is Adenine phosphoribosyltransferase (172 aa).

This sequence belongs to the purine/pyrimidine phosphoribosyltransferase family. Homodimer.

It is found in the cytoplasm. It catalyses the reaction AMP + diphosphate = 5-phospho-alpha-D-ribose 1-diphosphate + adenine. The protein operates within purine metabolism; AMP biosynthesis via salvage pathway; AMP from adenine: step 1/1. In terms of biological role, catalyzes a salvage reaction resulting in the formation of AMP, that is energically less costly than de novo synthesis. This Synechococcus sp. (strain CC9605) protein is Adenine phosphoribosyltransferase.